Reading from the N-terminus, the 372-residue chain is Ligninase LG6 (372 aa).

The first 21 residues, 1-21, serve as a signal peptide directing secretion; that stretch reads MALKQLAAAVALALSIQAAQG. Positions 22–28 are excised as a propeptide; it reads AAVKEKR. 2 disulfide bridges follow: cysteine 31–cysteine 43 and cysteine 62–cysteine 148. Histidine 75 acts as the Proton acceptor in catalysis. Positions 76, 94, 96, and 98 each coordinate Ca(2+). Histidine 204 serves as a coordination point for heme b. Positions 205, 222, 224, 227, and 229 each coordinate Ca(2+). Cysteine 277 and cysteine 345 are oxidised to a cystine. An N-linked (GlcNAc...) asparagine glycan is attached at asparagine 285. Residues 352–361 show a composition bias toward low complexity; the sequence is TLTTLPGPET. The tract at residues 352 to 372 is disordered; it reads TLTTLPGPETSVQRIQPPPGA.

This sequence belongs to the peroxidase family. Ligninase subfamily. It depends on heme b as a cofactor. The cofactor is Ca(2+).

The catalysed reaction is 1-(3,4-dimethoxyphenyl)-2-(2-methoxyphenoxy)propane-1,3-diol + H2O2 = 3,4-dimethoxybenzaldehyde + guaiacol + glycolaldehyde + H2O. It catalyses the reaction 2 (3,4-dimethoxyphenyl)methanol + H2O2 = 2 (3,4-dimethoxyphenyl)methanol radical + 2 H2O. It participates in secondary metabolite metabolism; lignin degradation. Depolymerization of lignin. Catalyzes the C(alpha)-C(beta) cleavage of the propyl side chains of lignin. In Phanerodontia chrysosporium (White-rot fungus), this protein is Ligninase LG6 (GLG6).